Reading from the N-terminus, the 165-residue chain is MKSIYITGYMGAGKTTIGKALSQELQMDVVDTDQKIEEKQKKAIRDIFAEEGEMTFREYESEMLRSLPVHNVIITTGGGIIERAENRKWMKENGTVVYLYCDPNVIAERLREDTTRPLFQKKDIDAFVKKFESRRAYYEEAHIHIDTTNKSVKQIMNELKEKINV.

11–16 (GAGKTT) contacts ATP. Thr15 serves as a coordination point for Mg(2+). Residues Asp33, Arg57, and Gly78 each coordinate substrate. Arg116 lines the ATP pocket. Arg134 provides a ligand contact to substrate.

Belongs to the shikimate kinase family. Monomer. Mg(2+) is required as a cofactor.

The protein resides in the cytoplasm. The enzyme catalyses shikimate + ATP = 3-phosphoshikimate + ADP + H(+). The protein operates within metabolic intermediate biosynthesis; chorismate biosynthesis; chorismate from D-erythrose 4-phosphate and phosphoenolpyruvate: step 5/7. In terms of biological role, catalyzes the specific phosphorylation of the 3-hydroxyl group of shikimic acid using ATP as a cosubstrate. The sequence is that of Shikimate kinase from Bacillus cereus (strain G9842).